Here is a 650-residue protein sequence, read N- to C-terminus: Sterol O-acyltransferase 2 (650 aa).

The tract at residues 41–79 (LTSSNNSCASEHEGEGEGEDERPATTSSAPTQNHSAGDV) is disordered. Over residues 64–75 (ATTSSAPTQNHS) the composition is skewed to polar residues. 5 helical membrane passes run 223 to 243 (FSGLYVAFWMAIAFGAVKALI), 300 to 320 (TGWAFTSIYELLFVGFYMYLT), 412 to 432 (INVSNFFMFTMFPTLIYQIEY), 450 to 470 (IFGTIFLMMIDAQILMHPVAM), and 493 to 513 (LLVDIVPGFIVMYILDFYLIW). The FYXDWWN motif signature appears at 531 to 537 (FYGDWWN). 2 consecutive transmembrane segments (helical) span residues 575–595 (ATLMTFFLSSVVHELAMYVIF) and 630–650 (VIFWLGICMGPSVMCTLYLTF). The active site involves histidine 587.

This sequence belongs to the membrane-bound acyltransferase family. Sterol o-acyltransferase subfamily.

Its subcellular location is the endoplasmic reticulum membrane. Its function is as follows. Sterol O-acyltransferase that catalyzes the formation of stery esters. The polypeptide is Sterol O-acyltransferase 2 (ARE2) (Saccharomyces uvarum (strain ATCC 76518 / CBS 7001 / CLIB 283 / NBRC 10550 / MCYC 623 / NCYC 2669 / NRRL Y-11845) (Yeast)).